The chain runs to 482 residues: Probable glycine dehydrogenase (decarboxylating) subunit 2 (482 aa).

The residue at position 269 (lysine 269) is an N6-(pyridoxal phosphate)lysine.

Belongs to the GcvP family. C-terminal subunit subfamily. As to quaternary structure, the glycine cleavage system is composed of four proteins: P, T, L and H. In this organism, the P 'protein' is a heterodimer of two subunits. Pyridoxal 5'-phosphate is required as a cofactor.

The enzyme catalyses N(6)-[(R)-lipoyl]-L-lysyl-[glycine-cleavage complex H protein] + glycine + H(+) = N(6)-[(R)-S(8)-aminomethyldihydrolipoyl]-L-lysyl-[glycine-cleavage complex H protein] + CO2. The glycine cleavage system catalyzes the degradation of glycine. The P protein binds the alpha-amino group of glycine through its pyridoxal phosphate cofactor; CO(2) is released and the remaining methylamine moiety is then transferred to the lipoamide cofactor of the H protein. In Pelodictyon phaeoclathratiforme (strain DSM 5477 / BU-1), this protein is Probable glycine dehydrogenase (decarboxylating) subunit 2.